A 423-amino-acid chain; its full sequence is Putative competence-damage inducible protein (423 aa).

It belongs to the CinA family.

The chain is Putative competence-damage inducible protein from Streptococcus pyogenes serotype M3 (strain ATCC BAA-595 / MGAS315).